A 794-amino-acid polypeptide reads, in one-letter code: Striatin-3 (794 aa).

Position 1 is an N-acetylmethionine (methionine 1). Positions 1-12 (MDELAGGGGGQG) are enriched in gly residues. Positions 1–59 (MDELAGGGGGQGMAVPPRPQQGPGGNLSLPPGANGAPGGGGPPAAETAGPPAGPELSRP) are disordered. A caveolin-binding region spans residues 70 to 78 (YIQHEWARF). Residues 76–135 (ARFEMERAHWEVERAELQARIAFLQGERKGQENLKKDLVRRIKMLEYALKQERAKYHKLK) adopt a coiled-coil conformation. Threonine 149 carries the post-translational modification Phosphothreonine. A calmodulin-binding region spans residues 164-181 (QNSQLTWKQGRQLLRQYL). Phosphoserine is present on residues serine 200, serine 212, serine 227, serine 255, and serine 332. The disordered stretch occupies residues 309–339 (EDGEGAGEARSSGDGTEWDKDDLSPTAEVWD). WD repeat units follow at residues 475-514 (SHFDGVRALAFHPVEPVLVTASEDHTLKLWNLQKTVPAKK), 528-567 (AHIGPVLSLAISSNGEQCFSGGIDATIQWWNMPSPNVDPY), 581-620 (AHTDAVWGLAYSGIKNQLLSCSADGTIRLWNPQEKLPCIC), 676-715 (QSSNHINRVVSHPTLPVTITAHEDRHIKFFDNKTGKMIHS), 718-757 (AHLDAVTSLAVDPNGIYLMSGSHDCSIRLWNLDSKTCVQE), and 764-794 (KLDESIYDVAFHPSKAYIASAGADALAKVFV).

This sequence belongs to the WD repeat striatin family. As to quaternary structure, tetramerizes. Part of the core of STRIPAK complexes composed of PP2A catalytic and scaffolding subunits, the striatins (PP2A regulatory subunits), the striatin-associated proteins MOB4, STRIP1 and STRIP2, PDCD10 and members of the STE20 kinases, such as STK24 and STK26. The STRIPAK complex can be extended by adapter proteins such as SLMAP:SIKE1 or CTTNBP2NL. Interacts with CDC42BPB.

It localises to the cytoplasm. Its subcellular location is the membrane. Calmodulin-binding scaffolding protein which is the center of the striatin-interacting phosphatase and kinase (STRIPAK) complexes. STRIPAK complexes have critical roles in protein (de)phosphorylation and are regulators of multiple signaling pathways including Hippo, MAPK, nuclear receptor and cytoskeleton remodeling. Different types of STRIPAK complexes are involved in a variety of biological processes such as cell growth, differentiation, apoptosis, metabolism and immune regulation. The polypeptide is Striatin-3 (Strn3) (Rattus norvegicus (Rat)).